A 457-amino-acid chain; its full sequence is G-protein coupled receptor 135 (457 aa).

Positions 1–27 (MEEQARPPSRPAASATLPGSAHPGGAA) are disordered. Residues 1–64 (MEEQARPPSR…EAAGSRGPAP (64 aa)) lie on the Extracellular side of the membrane. N-linked (GlcNAc...) asparagine glycosylation is present at Asn47. A helical membrane pass occupies residues 65-85 (LLWHGAAVAAQALVLLLIFLL). Residues 86-109 (SSLGNCAVMGVIVKHRQLRTVTNA) lie on the Cytoplasmic side of the membrane. Residues 110–130 (FILSLSLSDLLTALLCLPAAF) form a helical membrane-spanning segment. Residues 131 to 156 (LDLFAPPGDSGPWRSFCAASRFFSSC) lie on the Extracellular side of the membrane. A helical transmembrane segment spans residues 157 to 177 (FGIVSTFSVALISLDRYCAIV). At 178-189 (RPPRDKLGRRRA) the chain is on the cytoplasmic side. A helical transmembrane segment spans residues 190–210 (LQLLAGAWLAALGFSLPWELL). Residues 211–235 (RAPREPPTPQSFHRCLYRTSPDPAQ) are Extracellular-facing. Residues 236–256 (LGAAYSVGLVVACYLLPFLLM) traverse the membrane as a helical segment. Residues 257–295 (CFCRYHICKTVRLSDVRVRPMTTYARVLRFFSEVRTATT) lie on the Cytoplasmic side of the membrane. The helical transmembrane segment at 296 to 316 (VLIMIVFVICCWGPYCFLVLL) threads the bilayer. Over 317-329 (AATRQGQTTQAPS) the chain is Extracellular. Residues 330–350 (LLNVAAVWLTWANGAINPVIY) form a helical membrane-spanning segment. The Cytoplasmic segment spans residues 351–457 (AIRNPNISMF…HKSETRDSSI (107 aa)).

The protein belongs to the G-protein coupled receptor 1 family. As to quaternary structure, interacts with MTNR1B. Interacts with ARRB1 and ARRB2 in a spontaneous and agonist-independent manner; leading to the internalization of GPR135 in the endosomal compartment.

The protein resides in the cell membrane. It localises to the endosome membrane. Functionally, orphan receptor. Has spontaneous activity for beta-arrestin recruitment. Shows a reciprocal regulatory interaction with the melatonin receptor MTNR1B most likely through receptor heteromerization. The sequence is that of G-protein coupled receptor 135 (Gpr135) from Rattus norvegicus (Rat).